Reading from the N-terminus, the 416-residue chain is E3 ubiquitin-protein ligase DMA1 (416 aa).

Positions 1–30 are disordered; that stretch reads MSTNTVPSSPPNQTPPAASGIATSHDHTKF. Residues Lys-150, Lys-204, Lys-217, Lys-237, Lys-240, Lys-260, Lys-300, Lys-306, Lys-313, and Lys-317 each participate in a glycyl lysine isopeptide (Lys-Gly) (interchain with G-Cter in ubiquitin) cross-link. The FHA domain maps to 189–252; it reads IIIGRYTERV…SGTFLNHQRL (64 aa). Residues 327-371 form an RING-type zinc finger; it reads CSICLNKIKPCQAIFISPCAHSWHFHCVRRLVIMNYPQFMCPNCR.

It belongs to the DMA1 family. Interacts with CDC123. Interacts with PCL1. In terms of processing, UBC4-dependent autoubiquitination occurs at Lys-150, Lys-204, Lys-217, Lys-237, Lys-240, Lys-260, Lys-300, Lys-306, Lys-313 and Lys-317. UBC4-dependent autoubiquitination is responsible for DMA2 turnover. UBC13/MMS2-dependent autoubiquitination occurs at Lys-237 and Lys-306. Lys-204 and Lys-306 are also ubiquitinated in trans by DMA2 E3 ligase in association with UBC4.

Its subcellular location is the cytoplasm. The catalysed reaction is S-ubiquitinyl-[E2 ubiquitin-conjugating enzyme]-L-cysteine + [acceptor protein]-L-lysine = [E2 ubiquitin-conjugating enzyme]-L-cysteine + N(6)-ubiquitinyl-[acceptor protein]-L-lysine.. E3 ubiquitin-protein ligase which functions in cell cycle retarding in conjunction with the UBC4 and UBC13/MMS2 complex, 2 E2 ubiquitin conjugating enzymes. Involved in nutritional control of the cell cycle. Targets the G1 cyclin PCL1 for destruction. Required for proper spindle positioning, likely regulating septin ring deposition at the bud neck. This chain is E3 ubiquitin-protein ligase DMA1, found in Saccharomyces cerevisiae (strain ATCC 204508 / S288c) (Baker's yeast).